The following is a 345-amino-acid chain: Mycothiol acetyltransferase (345 aa).

2 N-acetyltransferase domains span residues 6–149 and 164–345; these read DTYE…KAME and FEVL…RGRL. E39 is a 1D-myo-inositol 2-(L-cysteinylamino)-2-deoxy-alpha-D-glucopyranoside binding site. 76–78 provides a ligand contact to acetyl-CoA; it reads LAV. 1D-myo-inositol 2-(L-cysteinylamino)-2-deoxy-alpha-D-glucopyranoside contacts are provided by E198, K261, and E277. Acetyl-CoA-binding positions include 281–283 and 288–294; these read VCL and RGRGLGQ. Position 315 (Y315) interacts with 1D-myo-inositol 2-(L-cysteinylamino)-2-deoxy-alpha-D-glucopyranoside.

It belongs to the acetyltransferase family. MshD subfamily. As to quaternary structure, monomer.

The enzyme catalyses 1D-myo-inositol 2-(L-cysteinylamino)-2-deoxy-alpha-D-glucopyranoside + acetyl-CoA = mycothiol + CoA + H(+). Its function is as follows. Catalyzes the transfer of acetyl from acetyl-CoA to desacetylmycothiol (Cys-GlcN-Ins) to form mycothiol. The polypeptide is Mycothiol acetyltransferase (Corynebacterium jeikeium (strain K411)).